The sequence spans 238 residues: MTDTYNSISNFIENELTALLSSDDYLMDDLAGELPNEVCRLLKAQVIEKRKDAMSRGKQDLLSKEIYDNESELRASQSQQIMELVGDIPKYSLGSELRNRVEGEPQSTSIERLIEDVLKLPQMEVADEEEVEVENDLKVLSEYSNLRKDLILKCQALQIGESKLSDILSQTNSINSLTTSIKEASEDDDISEYFATYNGKLVVALEEMKLLLEEAVKTFGNSPEKREKIKKILSELKK.

Ser222 is modified (phosphoserine).

The protein belongs to the NKP1 family. As to quaternary structure, component of the inner kinetochore constitutive centromere-associated network (CCAN) (also known as central kinetochore CTF19 complex in yeast), which is composed of at least AME1, CHL4, CNN1, CTF3, CTF19, IML3, MCM16, MCM21, MCM22, MHF1, MHF2, MIF2, NKP1, NKP2, OKP1 and WIP1. NKP1 interacts directly with OKP1 and AME1.

The protein localises to the nucleus. It is found in the chromosome. It localises to the centromere. The protein resides in the kinetochore. Component of the kinetochore, a multiprotein complex that assembles on centromeric DNA and attaches chromosomes to spindle microtubules, mediating chromosome segregation and sister chromatid segregation during meiosis and mitosis. Component of the inner kinetochore constitutive centromere-associated network (CCAN), which serves as a structural platform for outer kinetochore assembly. This is Inner kinetochore subunit NKP1 (NKP1) from Saccharomyces cerevisiae (strain ATCC 204508 / S288c) (Baker's yeast).